We begin with the raw amino-acid sequence, 572 residues long: Transmembrane glycoprotein NMB (572 aa).

The N-terminal stretch at 1–22 (MESLCGVLVFLLLAAGLPLQAA) is a signal peptide. Residues 23 to 500 (KRFRDVLGHE…DLGSPLRTVN (478 aa)) lie on the Extracellular side of the membrane. N-linked (GlcNAc...) asparagine glycosylation is found at N93, N134, N200, N249, N275, N296, N300, N306, and N312. In terms of domain architecture, PKD spans 251 to 338 (SDETFLRDLP…SPSSSTSPSP (88 aa)). Positions 321–359 (GPCPSPTPSPSSSTSPSPASSPSPTLSTPSPSLMPTGHK) are disordered. The segment covering 330 to 356 (PSSSTSPSPASSPSPTLSTPSPSLMPT) has biased composition (low complexity). N461 and N469 each carry an N-linked (GlcNAc...) asparagine glycan. The chain crosses the membrane as a helical span at residues 501–521 (GVLISIGCLAMFVTMVTILLY). At 522–572 (KKHKTYKPIGNCTRNVVKGKGLSVFLSHAKAPFSRGDREKDPLLQDKPWML) the chain is on the cytoplasmic side. S544 carries the phosphoserine modification. Positions 556 to 558 (RGD) match the Cell attachment site motif.

It belongs to the PMEL/NMB family.

The protein resides in the cell membrane. Its subcellular location is the melanosome membrane. The protein localises to the early endosome membrane. Could be a melanogenic enzyme. This is Transmembrane glycoprotein NMB (Gpnmb) from Rattus norvegicus (Rat).